The sequence spans 540 residues: Chaperonin GroEL 4 (540 aa).

ATP-binding positions include 29 to 32 (TLGP), 86 to 90 (DGTTT), glycine 413, 477 to 479 (NAA), and aspartate 493.

It belongs to the chaperonin (HSP60) family. In terms of assembly, forms a cylinder of 14 subunits composed of two heptameric rings stacked back-to-back. Interacts with the co-chaperonin GroES.

It localises to the cytoplasm. It catalyses the reaction ATP + H2O + a folded polypeptide = ADP + phosphate + an unfolded polypeptide.. Functionally, together with its co-chaperonin GroES, plays an essential role in assisting protein folding. The GroEL-GroES system forms a nano-cage that allows encapsulation of the non-native substrate proteins and provides a physical environment optimized to promote and accelerate protein folding. The chain is Chaperonin GroEL 4 from Frankia casuarinae (strain DSM 45818 / CECT 9043 / HFP020203 / CcI3).